The primary structure comprises 373 residues: Diels-Alderase (373 aa).

The protein belongs to the Diels-Alderase family.

The catalysed reaction is (5S)-3-[(2E,6R,8E,10E,12E)-2,6-dimethyltetradeca-2,8,10,12-tetraenoyl]-5-(hydroxymethyl)pyrrolidine-2,4-dione = trichosetin. It participates in mycotoxin biosynthesis. In terms of biological role, hybrid PKS-NRPS synthetase; part of the gene cluster that mediates the biosynthesis of trichosetin, a trans-fused decalin-containing tetramic acid with antimicrobial activity. The PKS module of PKS-NRPS1 together with the enoylreductase (ER) catalyze the formation of the polyketide unit which is then conjugated to L-serine by the condensation domain of the PKS-NRPS1 NRPS module. Activity of the Dieckmann cyclase domain (RED) results in release of the Dieckmann product intermediate. Diels-Alderase (DA) is involved in endo-selective Diels-Alder cycloaddition to form the decalin ring, leading to the production of N-desmethylequisetin also called trichosetin. The cluster does not contain the equisetin N-methyltransferase and consequently, trichosetin is isolated as final product. This is Diels-Alderase from Gibberella fujikuroi (strain CBS 195.34 / IMI 58289 / NRRL A-6831) (Bakanae and foot rot disease fungus).